Consider the following 392-residue polypeptide: Acyl-CoA dehydrogenase IpdE1 (392 aa).

FAD-binding positions include 126–129 (QGYS) and serine 171. Glutamate 254 functions as the Proton acceptor in the catalytic mechanism. 371–373 (SNE) lines the FAD pocket.

Belongs to the acyl-CoA dehydrogenase family. As to quaternary structure, heterotetramer composed of 2 IpdE1 subunits and 2 IpdE2 subunits. The cofactor is FAD.

It carries out the reaction 3-[(3aS,4S,5R,7aS)-5-hydroxy-7a-methyl-1-oxo-octahydro-1H-inden-4-yl]propanoyl-CoA + A = (2E)-3-[(3aS,4S,5R,7aS)-5-hydroxy-7a-methyl-1-oxo-octahydro-1H-inden-4-yl]prop-2-enoyl-CoA + AH2. The protein operates within steroid metabolism; cholesterol degradation. Involved in cholesterol degradation. Catalyzes the dehydrogenation of 5OH-HIP-CoA to 5OH-HIPE-CoA. The polypeptide is Acyl-CoA dehydrogenase IpdE1 (Mycolicibacterium smegmatis (strain ATCC 700084 / mc(2)155) (Mycobacterium smegmatis)).